The primary structure comprises 156 residues: ATP synthase subunit b (156 aa).

Residues 13–33 (AFIIFVWFCMKFVWPPLMNAI) form a helical membrane-spanning segment.

Belongs to the ATPase B chain family. As to quaternary structure, F-type ATPases have 2 components, F(1) - the catalytic core - and F(0) - the membrane proton channel. F(1) has five subunits: alpha(3), beta(3), gamma(1), delta(1), epsilon(1). F(0) has three main subunits: a(1), b(2) and c(10-14). The alpha and beta chains form an alternating ring which encloses part of the gamma chain. F(1) is attached to F(0) by a central stalk formed by the gamma and epsilon chains, while a peripheral stalk is formed by the delta and b chains.

Its subcellular location is the cell inner membrane. F(1)F(0) ATP synthase produces ATP from ADP in the presence of a proton or sodium gradient. F-type ATPases consist of two structural domains, F(1) containing the extramembraneous catalytic core and F(0) containing the membrane proton channel, linked together by a central stalk and a peripheral stalk. During catalysis, ATP synthesis in the catalytic domain of F(1) is coupled via a rotary mechanism of the central stalk subunits to proton translocation. In terms of biological role, component of the F(0) channel, it forms part of the peripheral stalk, linking F(1) to F(0). In Shewanella woodyi (strain ATCC 51908 / MS32), this protein is ATP synthase subunit b.